The chain runs to 887 residues: Alanine--tRNA ligase (887 aa).

Zn(2+)-binding residues include His564, His568, Cys676, and His680. Positions 854–873 (GQGGGGRPDMAQSGGPKGNK) are disordered.

The protein belongs to the class-II aminoacyl-tRNA synthetase family. Zn(2+) serves as cofactor.

It localises to the cytoplasm. It catalyses the reaction tRNA(Ala) + L-alanine + ATP = L-alanyl-tRNA(Ala) + AMP + diphosphate. Functionally, catalyzes the attachment of alanine to tRNA(Ala) in a two-step reaction: alanine is first activated by ATP to form Ala-AMP and then transferred to the acceptor end of tRNA(Ala). Also edits incorrectly charged Ser-tRNA(Ala) and Gly-tRNA(Ala) via its editing domain. The polypeptide is Alanine--tRNA ligase (Bartonella henselae (strain ATCC 49882 / DSM 28221 / CCUG 30454 / Houston 1) (Rochalimaea henselae)).